The following is a 111-amino-acid chain: Large ribosomal subunit protein uL23 (111 aa).

This sequence belongs to the universal ribosomal protein uL23 family. In terms of assembly, part of the 50S ribosomal subunit. Contacts protein L29, and trigger factor when it is bound to the ribosome.

Functionally, one of the early assembly proteins it binds 23S rRNA. One of the proteins that surrounds the polypeptide exit tunnel on the outside of the ribosome. Forms the main docking site for trigger factor binding to the ribosome. The polypeptide is Large ribosomal subunit protein uL23 (Chlamydia felis (strain Fe/C-56) (Chlamydophila felis)).